We begin with the raw amino-acid sequence, 378 residues long: Succinyl-diaminopimelate desuccinylase 2 (378 aa).

Position 68 (His68) interacts with Zn(2+). Asp70 is an active-site residue. A Zn(2+)-binding site is contributed by Asp101. Glu135 (proton acceptor) is an active-site residue. 3 residues coordinate Zn(2+): Glu136, Glu164, and His350.

It belongs to the peptidase M20A family. DapE subfamily. As to quaternary structure, homodimer. Zn(2+) is required as a cofactor. The cofactor is Co(2+).

The catalysed reaction is N-succinyl-(2S,6S)-2,6-diaminopimelate + H2O = (2S,6S)-2,6-diaminopimelate + succinate. It functions in the pathway amino-acid biosynthesis; L-lysine biosynthesis via DAP pathway; LL-2,6-diaminopimelate from (S)-tetrahydrodipicolinate (succinylase route): step 3/3. Catalyzes the hydrolysis of N-succinyl-L,L-diaminopimelic acid (SDAP), forming succinate and LL-2,6-diaminopimelate (DAP), an intermediate involved in the bacterial biosynthesis of lysine and meso-diaminopimelic acid, an essential component of bacterial cell walls. The polypeptide is Succinyl-diaminopimelate desuccinylase 2 (Alteromonas mediterranea (strain DSM 17117 / CIP 110805 / LMG 28347 / Deep ecotype)).